Here is a 320-residue protein sequence, read N- to C-terminus: UDP-N-acetylenolpyruvoylglucosamine reductase (320 aa).

One can recognise an FAD-binding PCMH-type domain in the interval 35–216 (RAGGPAQVLF…KQAMDEVQHH (182 aa)). Residue arginine 181 is part of the active site. Serine 230 (proton donor) is an active-site residue. Glutamate 300 is an active-site residue.

Belongs to the MurB family. The cofactor is FAD.

Its subcellular location is the cytoplasm. It carries out the reaction UDP-N-acetyl-alpha-D-muramate + NADP(+) = UDP-N-acetyl-3-O-(1-carboxyvinyl)-alpha-D-glucosamine + NADPH + H(+). It participates in cell wall biogenesis; peptidoglycan biosynthesis. Its function is as follows. Cell wall formation. In Brucella anthropi (strain ATCC 49188 / DSM 6882 / CCUG 24695 / JCM 21032 / LMG 3331 / NBRC 15819 / NCTC 12168 / Alc 37) (Ochrobactrum anthropi), this protein is UDP-N-acetylenolpyruvoylglucosamine reductase.